The chain runs to 226 residues: MKITFLGHAAVLVEGKKNLIIDPFITGNPACPVKLEDLPKIDYILVTHGHGDHLGDAVEIAKKNDAIVISNYEICQYLGKKGVKTHAMHIGGSYLFDFGRVKMTPAVHGSGILDGENIIYGGNPGGFLITLEGKKIYHAGDTGLTKDMELLKEENVDVAFLPIGGNFVMDVEDAIRAVSMISPRKVVPMHYGTWEIIFADVELFKKKVEEMGVECVILEPGESLEL.

This sequence belongs to the UPF0173 family.

The protein is UPF0173 metal-dependent hydrolase CTN_1413 of Thermotoga neapolitana (strain ATCC 49049 / DSM 4359 / NBRC 107923 / NS-E).